The sequence spans 462 residues: Cathepsin F (462 aa).

The signal sequence occupies residues 1–19; that stretch reads MAPLLQLLWLLTLLSTVAL. A propeptide spans 20–248 (activation peptide); the sequence is SPVPAKPWAD…MSPAKSINDL (229 aa). N35, N138, and N173 each carry an N-linked (GlcNAc...) asparagine glycan. 2 disulfides stabilise this stretch: C270–C311 and C304–C344. C273 is an active-site residue. 2 N-linked (GlcNAc...) asparagine glycosylation sites follow: N345 and N356. C402 and C450 are joined by a disulfide. H409 is an active-site residue. N418 is a glycosylation site (N-linked (GlcNAc...) asparagine). Residue N429 is part of the active site.

Belongs to the peptidase C1 family.

It is found in the lysosome. The enzyme catalyses The recombinant enzyme cleaves synthetic substrates with Phe and Leu (better than Val) in P2, with high specificity constant (kcat/Km) comparable to that of cathepsin L.. Thiol protease which is believed to participate in intracellular degradation and turnover of proteins. Has also been implicated in tumor invasion and metastasis. This Mus musculus (Mouse) protein is Cathepsin F (Ctsf).